We begin with the raw amino-acid sequence, 425 residues long: Glutamyl-tRNA reductase (425 aa).

Residues 51–54, S111, 116–118, and Q122 contribute to the substrate site; these read TCNR and DMQ. The Nucleophile role is filled by C52. 191 to 196 lines the NADP(+) pocket; the sequence is GLGEIG.

Belongs to the glutamyl-tRNA reductase family. Homodimer.

It carries out the reaction (S)-4-amino-5-oxopentanoate + tRNA(Glu) + NADP(+) = L-glutamyl-tRNA(Glu) + NADPH + H(+). It functions in the pathway porphyrin-containing compound metabolism; protoporphyrin-IX biosynthesis; 5-aminolevulinate from L-glutamyl-tRNA(Glu): step 1/2. In terms of biological role, catalyzes the NADPH-dependent reduction of glutamyl-tRNA(Glu) to glutamate 1-semialdehyde (GSA). In Cytophaga hutchinsonii (strain ATCC 33406 / DSM 1761 / CIP 103989 / NBRC 15051 / NCIMB 9469 / D465), this protein is Glutamyl-tRNA reductase.